We begin with the raw amino-acid sequence, 166 residues long: Protein-export protein SecB (166 aa).

Over residues 1 to 16 the composition is skewed to polar residues; that stretch reads MTDTSAAGNPTPGQQP. The disordered stretch occupies residues 1–21; the sequence is MTDTSAAGNPTPGQQPANPPS.

This sequence belongs to the SecB family. Homotetramer, a dimer of dimers. One homotetramer interacts with 1 SecA dimer.

The protein resides in the cytoplasm. Functionally, one of the proteins required for the normal export of preproteins out of the cell cytoplasm. It is a molecular chaperone that binds to a subset of precursor proteins, maintaining them in a translocation-competent state. It also specifically binds to its receptor SecA. This chain is Protein-export protein SecB, found in Hyphomonas neptunium (strain ATCC 15444).